The sequence spans 187 residues: Decorin-binding protein B (187 aa).

Residues 1 to 20 (MKIGKLNSIVIALFFKLLVA) form the signal peptide.

This sequence belongs to the decorin-binding protein family.

Its function is as follows. Binds to decorin which may mediate the adherence of B.burgdorferi to collagen fibers in skin and other tissues. The sequence is that of Decorin-binding protein B (dbpB) from Borreliella burgdorferi (strain ATCC 35210 / DSM 4680 / CIP 102532 / B31) (Borrelia burgdorferi).